Consider the following 390-residue polypeptide: GPI inositol-deacylase (390 aa).

Residues F21–Y41 traverse the membrane as a helical segment. The active site involves S202. A helical transmembrane segment spans residues V354–I374.

This sequence belongs to the GPI inositol-deacylase family.

The protein resides in the endoplasmic reticulum membrane. Functionally, involved in inositol deacylation of GPI-anchored proteins which plays important roles in the quality control and ER-associated degradation of GPI-anchored proteins. The sequence is that of GPI inositol-deacylase (BST1) from Candida albicans (strain SC5314 / ATCC MYA-2876) (Yeast).